Consider the following 123-residue polypeptide: Beta-2-microglobulin (123 aa).

Positions 1-21 (MSRLFLFALLGHLCFLPYLDA) are cleaved as a signal peptide. The region spanning 29–118 (PRVQVYSRYP…STLNEPKVVK (90 aa)) is the Ig-like C1-type domain. C49 and C104 are oxidised to a cystine.

It belongs to the beta-2-microglobulin family. As to quaternary structure, heterodimer of an alpha chain and a beta chain. Beta-2-microglobulin is the beta-chain of major histocompatibility complex class I molecules.

It is found in the secreted. Functionally, component of the class I major histocompatibility complex (MHC). Involved in the presentation of peptide antigens to the immune system. In Monodelphis domestica (Gray short-tailed opossum), this protein is Beta-2-microglobulin (B2M).